We begin with the raw amino-acid sequence, 327 residues long: Phenylalanine--tRNA ligase alpha subunit (327 aa).

Residue E252 coordinates Mg(2+).

The protein belongs to the class-II aminoacyl-tRNA synthetase family. Phe-tRNA synthetase alpha subunit type 1 subfamily. Tetramer of two alpha and two beta subunits. Requires Mg(2+) as cofactor.

The protein resides in the cytoplasm. It catalyses the reaction tRNA(Phe) + L-phenylalanine + ATP = L-phenylalanyl-tRNA(Phe) + AMP + diphosphate + H(+). The polypeptide is Phenylalanine--tRNA ligase alpha subunit (Yersinia pestis bv. Antiqua (strain Antiqua)).